Reading from the N-terminus, the 1419-residue chain is Multidrug resistance protein 1 (1419 aa).

The r domain; regulates transporter activity stretch occupies residues 1–37 (MGKEQKEKKDGNLSIKEEVEKELNKKSTAELFRKIKN). The Cytoplasmic segment spans residues 1 to 60 (MGKEQKEKKDGNLSIKEEVEKELNKKSTAELFRKIKNEKISFFLPFKCLPAQHRKLLFIS). Positions 58–345 (FISFVCAVLS…ILPNITEYMK (288 aa)) constitute an ABC transmembrane type-1 1 domain. A helical transmembrane segment spans residues 61-81 (FVCAVLSGGTLPFFISVFGVI). Over 82–90 (LKNMNLGDD) the chain is Vacuolar. Residues 91-111 (INPIILSLVSIGLVQFILSMI) traverse the membrane as a helical segment. The Cytoplasmic portion of the chain corresponds to 112-168 (SSYCMDVITSKILKTLKLEYLRSVFYQDGQFHDNNPGSKLRSDLDFYLEQVSSGIGT). The helical transmembrane segment at 169 to 189 (KFITIFTYASSFLGLYIWSLI) threads the bilayer. Over 190–191 (KN) the chain is Vacuolar. Residues 192-212 (ARLTLCITCVFPLIYVCGVIC) traverse the membrane as a helical segment. Residues 213–275 (NKKVKLNKKT…KYILKANFVE (63 aa)) lie on the Cytoplasmic side of the membrane. Residues 276–296 (ALHIGLINGLILVSYAFGFWY) traverse the membrane as a helical segment. Residues 297–316 (GTRIIINSATNQYPNNDFNG) lie on the Vacuolar side of the membrane. A helical transmembrane segment spans residues 317 to 337 (ASVISILLGVLISMFMLTIIL). Over 338–788 (PNITEYMKAL…YKEIFSYKKD (451 aa)) the chain is Cytoplasmic. Residues 378-662 (IEFKNVRFHY…NNNNNNNNNK (285 aa)) enclose the ABC transporter 1 domain. ATP is bound by residues Tyr-387, Thr-389, Arg-390, Ser-415, Cys-417, Gly-418, Lys-419, Ser-420, Thr-421, Gln-462, Lys-562, Ser-564, Gly-566, and Gln-567. Gln-462 is a binding site for Mg(2+). Disordered stretches follow at residues 639–665 (ERSDNNNNNNNDDNNNNNNNNNNKINN) and 697–752 (SSNK…TAEN). Low complexity-rich tracts occupy residues 643–665 (NNNNNNNDDNNNNNNNNNNKINN) and 697–715 (SSNKSSNNGNDNGSDNKSS). Residues 723-749 (GNDADNMNSLSIHENENISNNRNCKNT) show a composition bias toward polar residues. Residues 789-809 (VTIIFFSILVAGGLYPVFALL) form a helical membrane-spanning segment. In terms of domain architecture, ABC transmembrane type-1 2 spans 791–1083 (IIFFSILVAG…GSYAGKLMSL (293 aa)). At 810–829 (YARYVSTLFDFANLEYNSNK) the chain is on the vacuolar side. Residues 830-850 (YSIYILLIAIAMFISETLKNY) traverse the membrane as a helical segment. Residues 851–907 (YNNKIGEKVEKTMKRRLFENILYQEMSFFDQDKNTPGVLSAHINRDVHLLKTGLVNN) are Cytoplasmic-facing. The next 2 membrane-spanning stretches (helical) occupy residues 908–928 (IVIFSHFIMLFLVSMVMSFYF) and 929–949 (CPIVAAVLTFIYFINMRVFAV). Residues 950–1032 (RARLTKSKEI…RIIVNAALWG (83 aa)) lie on the Cytoplasmic side of the membrane. The chain crosses the membrane as a helical span at residues 1033-1053 (FSQSAQLFINSFAYWFGSFLI). Residues 1054–1057 (KRGT) lie on the Vacuolar side of the membrane. Residues 1058–1078 (ILVDDFMKSLFTFIFTGSYAG) traverse the membrane as a helical segment. Residues 1079–1419 (KLMSLKGDSE…IYKKYVKLAK (341 aa)) are Cytoplasmic-facing. An ABC transporter 2 domain is found at 1126 to 1416 (VDIKDVNFRY…QDGIYKKYVK (291 aa)). The ATP site is built by Tyr-1135, Arg-1138, Thr-1163, Gly-1164, Gly-1166, Lys-1167, Ser-1168, Thr-1169, Gln-1256, Leu-1312, Ser-1313, Gly-1315, and Gln-1316. Residue Ser-1168 coordinates Mg(2+). Gln-1256 contacts Mg(2+).

It belongs to the ABC transporter superfamily. ABCB family. Multidrug resistance exporter (TC 3.A.1.201) subfamily.

Its subcellular location is the vacuole membrane. The catalysed reaction is ATP + H2O + xenobioticSide 1 = ADP + phosphate + xenobioticSide 2.. In terms of biological role, energy-dependent efflux pump responsible for decreased drug accumulation in multidrug-resistant cells. Transports lumefantrine, mefloquine, chloroquine, quinine, quinidine, amodiaquine, piperaquine, dihydroartemisinin and quinacrine. In Plasmodium falciparum (isolate 3D7), this protein is Multidrug resistance protein 1.